The following is a 313-amino-acid chain: Myeloma-overexpressed gene protein (313 aa).

The tract at residues 107–129 is disordered; it reads ERNKGDKGAQTGAGLSQEAEDVD.

This chain is Myeloma-overexpressed gene protein (MYEOV), found in Homo sapiens (Human).